The following is a 223-amino-acid chain: Ras-related protein Rab-21 (223 aa).

An N-acetylalanine modification is found at Ala-2. Residues Gly-26, Gly-29, Lys-30, Thr-31, Ser-32, Asn-43, Asp-44, His-46, Thr-48, and Thr-49 each coordinate GTP. Thr-31 is a binding site for Mg(2+). Residues 41–54 (KFNDKHITTLQASF) carry the Switch 1 motif. Residues Thr-49 and Asp-72 each contribute to the Mg(2+) site. Residues 74-92 (AGQERFHALGPIYYRDSNG) carry the Switch 2 motif. GTP contacts are provided by Gly-75, Asn-130, Lys-131, Asp-133, Ala-161, and Lys-162. 2 S-geranylgeranyl cysteine lipidation sites follow: Cys-219 and Cys-220. Cys-220 carries the cysteine methyl ester modification. A propeptide spans 221–223 (SSG) (removed in mature form).

This sequence belongs to the small GTPase superfamily. Rab family. As to quaternary structure, interacts with the cytoplasmic tail of integrins ITGA1, ITGA2, ITGA5, ITGA6, ITGA11 and ITGB1; this interaction is dependent upon its GDP/GTP cycle. Interacts with RABGEF1 (via VPS9 domain). Interacts with ANKRD27. Interacts (in GTP-bound form) with VAMP8 in response to starvation; the interaction probably regulates VAMP8 endolysosomal trafficking. Interacts (active GTP-bound form) with TMED10; the interaction is indirect and regulates TMED10 abundance and localization at the Golgi. Requires Mg(2+) as cofactor.

Its subcellular location is the endoplasmic reticulum membrane. It localises to the golgi apparatus. The protein localises to the trans-Golgi network. The protein resides in the golgi apparatus membrane. It is found in the early endosome membrane. Its subcellular location is the cytoplasmic vesicle membrane. It localises to the cleavage furrow. The protein localises to the cell projection. The protein resides in the neuron projection. It catalyses the reaction GTP + H2O = GDP + phosphate + H(+). With respect to regulation, regulated by guanine nucleotide exchange factors (GEFs) including ANKRD27 and RABGEF1, which promote the exchange of bound GDP for free GTP. Regulated by GTPase activating proteins (GAPs) which increase the GTP hydrolysis activity. Inhibited by GDP dissociation inhibitors (GDIs). In terms of biological role, the small GTPases Rab are key regulators of intracellular membrane trafficking, from the formation of transport vesicles to their fusion with membranes. Rabs cycle between an inactive GDP-bound form and an active GTP-bound form that is able to recruit to membranes different sets of downstream effectors directly responsible for vesicle formation, movement, tethering and fusion. RAB21 is involved in membrane trafficking control. Regulates integrin internalization and recycling, but does not influence the traffic of endosomally translocated receptors in general. As a result, may regulate cell adhesion and migration. During the mitosis of adherent cells, controls the endosomal trafficking of integrins which is required for the successful completion of cytokinesis. Involved in neurite growth. Following SBF2/MTMT13-mediated activation in response to starvation-induced autophagy, binds to and regulates SNARE protein VAMP8 endolysosomal transport required for SNARE-mediated autophagosome-lysosome fusion. Modulates protein levels of the cargo receptors TMED2 and TMED10, and required for appropriate Golgi localization of TMED10. This is Ras-related protein Rab-21 from Rattus norvegicus (Rat).